Here is a 371-residue protein sequence, read N- to C-terminus: Aspartate-semialdehyde dehydrogenase (371 aa).

Residues 11–14 (RGMV), 38–39 (TS), and Gln75 each bind NADP(+). Residue Arg104 coordinates phosphate. The active-site Acyl-thioester intermediate is Cys137. Residue Gln164 coordinates substrate. 167 to 168 (SG) contacts NADP(+). Substrate is bound at residue Glu243. Residue Lys246 participates in phosphate binding. Arg269 provides a ligand contact to substrate. The Proton acceptor role is filled by His276. Gln352 serves as a coordination point for NADP(+).

The protein belongs to the aspartate-semialdehyde dehydrogenase family. Homodimer.

The catalysed reaction is L-aspartate 4-semialdehyde + phosphate + NADP(+) = 4-phospho-L-aspartate + NADPH + H(+). It functions in the pathway amino-acid biosynthesis; L-lysine biosynthesis via DAP pathway; (S)-tetrahydrodipicolinate from L-aspartate: step 2/4. It participates in amino-acid biosynthesis; L-methionine biosynthesis via de novo pathway; L-homoserine from L-aspartate: step 2/3. Its pathway is amino-acid biosynthesis; L-threonine biosynthesis; L-threonine from L-aspartate: step 2/5. In terms of biological role, catalyzes the NADPH-dependent formation of L-aspartate-semialdehyde (L-ASA) by the reductive dephosphorylation of L-aspartyl-4-phosphate. This chain is Aspartate-semialdehyde dehydrogenase, found in Buchnera aphidicola subsp. Schizaphis graminum (strain Sg).